The chain runs to 304 residues: Glutaminase (304 aa).

Positions 63, 114, 158, 165, 189, 240, and 258 each coordinate substrate.

It belongs to the glutaminase family. As to quaternary structure, homotetramer.

The catalysed reaction is L-glutamine + H2O = L-glutamate + NH4(+). The sequence is that of Glutaminase from Shewanella baltica (strain OS195).